Consider the following 398-residue polypeptide: Phosphoglycerate kinase (398 aa).

Substrate is bound by residues 21 to 23, R36, 59 to 62, R117, and R150; these read DFN and HFGR. ATP is bound by residues K200, E321, and 351 to 354; that span reads GGDS.

It belongs to the phosphoglycerate kinase family. As to quaternary structure, monomer.

The protein localises to the cytoplasm. The enzyme catalyses (2R)-3-phosphoglycerate + ATP = (2R)-3-phospho-glyceroyl phosphate + ADP. It functions in the pathway carbohydrate degradation; glycolysis; pyruvate from D-glyceraldehyde 3-phosphate: step 2/5. This is Phosphoglycerate kinase from Wolbachia sp. subsp. Drosophila simulans (strain wRi).